We begin with the raw amino-acid sequence, 202 residues long: dTTP/UTP pyrophosphatase (202 aa).

D74 functions as the Proton acceptor in the catalytic mechanism.

The protein belongs to the Maf family. YhdE subfamily. Requires a divalent metal cation as cofactor.

The protein resides in the cytoplasm. It catalyses the reaction dTTP + H2O = dTMP + diphosphate + H(+). The catalysed reaction is UTP + H2O = UMP + diphosphate + H(+). In terms of biological role, nucleoside triphosphate pyrophosphatase that hydrolyzes dTTP and UTP. May have a dual role in cell division arrest and in preventing the incorporation of modified nucleotides into cellular nucleic acids. The polypeptide is dTTP/UTP pyrophosphatase (Methylococcus capsulatus (strain ATCC 33009 / NCIMB 11132 / Bath)).